The chain runs to 490 residues: Phenylacetaldehyde synthase (490 aa).

The L-phenylalanine site is built by P92, H193, and H308. Position 309 is an N6-(pyridoxal phosphate)lysine (K309). An L-phenylalanine-binding site is contributed by F338.

The protein belongs to the group II decarboxylase family. In terms of assembly, homodimer. Requires pyridoxal 5'-phosphate as cofactor. Expressed in roots, rosette leaves, stems, cauline leaves and flowers.

It carries out the reaction L-phenylalanine + O2 + H2O + H(+) = 2-phenylacetaldehyde + H2O2 + NH4(+) + CO2. The enzyme catalyses L-dopa + O2 + H2O + H(+) = 3,4-dihydroxyphenylacetaldehyde + H2O2 + NH4(+) + CO2. Its function is as follows. Bifunctional enzyme that catalyzes the decarboxylation of L-phenylalanine to 2-phenylethylamine, which is then oxidized to form 2-phenylacetaldehyde, a constituent of floral scent. 2-phenylacetaldehyde is a precursor of 2-phenylethanol, another constituent of floral scent. Catalyzes both the decarboxylation and deamination of L-dopa to 3,4-dihydroxylphenylacetaldehyde (DHPAA). The protein is Phenylacetaldehyde synthase of Arabidopsis thaliana (Mouse-ear cress).